A 268-amino-acid polypeptide reads, in one-letter code: tRNA pseudouridine synthase A (268 aa).

Asp52 functions as the Nucleophile in the catalytic mechanism. Residue Tyr110 coordinates substrate.

Belongs to the tRNA pseudouridine synthase TruA family. As to quaternary structure, homodimer.

The enzyme catalyses uridine(38/39/40) in tRNA = pseudouridine(38/39/40) in tRNA. Functionally, formation of pseudouridine at positions 38, 39 and 40 in the anticodon stem and loop of transfer RNAs. The polypeptide is tRNA pseudouridine synthase A (Prochlorococcus marinus (strain MIT 9301)).